We begin with the raw amino-acid sequence, 537 residues long: Berberine bridge enzyme-like 26 (537 aa).

Positions 1–27 (MGISKPLPLFSILVLYFSLYTITPTSS) are cleaved as a signal peptide. Cys38 and Cys102 are oxidised to a cystine. A glycan (N-linked (GlcNAc...) asparagine) is linked at Asn59. Residues 80-256 (SMPKPGFIFS…LAWKIKLVPV (177 aa)) form the FAD-binding PCMH-type domain. Residues 117–181 (HDYEGLSYVS…KVHGFPAGLC (65 aa)) constitute a cross-link (6-(S-cysteinyl)-8alpha-(pros-histidyl)-FAD (His-Cys)). A glycan (N-linked (GlcNAc...) asparagine) is linked at Asn306.

Belongs to the oxygen-dependent FAD-linked oxidoreductase family. Requires FAD as cofactor. In terms of processing, the FAD cofactor is bound via a bicovalent 6-S-cysteinyl, 8alpha-N1-histidyl FAD linkage.

Its subcellular location is the secreted. The protein localises to the cell wall. This chain is Berberine bridge enzyme-like 26, found in Arabidopsis thaliana (Mouse-ear cress).